A 56-amino-acid polypeptide reads, in one-letter code: UPF0391 membrane protein Rru_A0119 (56 aa).

2 consecutive transmembrane segments (helical) span residues 4 to 24 (WALI…GGIA) and 30 to 50 (IAQI…IMHF).

Belongs to the UPF0391 family.

The protein resides in the cell membrane. The sequence is that of UPF0391 membrane protein Rru_A0119 from Rhodospirillum rubrum (strain ATCC 11170 / ATH 1.1.1 / DSM 467 / LMG 4362 / NCIMB 8255 / S1).